The sequence spans 174 residues: Protein VdlD (174 aa).

Positions 20–132 (DRTKLLMSYL…YFTMVAVENG (113 aa)) constitute a HotDog ACOT-type domain.

Belongs to the acyl coenzyme A hydrolase family.

In Helicobacter pylori (strain J99 / ATCC 700824) (Campylobacter pylori J99), this protein is Protein VdlD (vdlD).